A 184-amino-acid polypeptide reads, in one-letter code: ATP synthase subunit b, chloroplastic (184 aa).

Residues 29–49 (TNLINLGVVLGLLVYFGKGVL) traverse the membrane as a helical segment.

The protein belongs to the ATPase B chain family. F-type ATPases have 2 components, F(1) - the catalytic core - and F(0) - the membrane proton channel. F(1) has five subunits: alpha(3), beta(3), gamma(1), delta(1), epsilon(1). F(0) has four main subunits: a(1), b(1), b'(1) and c(10-14). The alpha and beta chains form an alternating ring which encloses part of the gamma chain. F(1) is attached to F(0) by a central stalk formed by the gamma and epsilon chains, while a peripheral stalk is formed by the delta, b and b' chains.

Its subcellular location is the plastid. It localises to the chloroplast thylakoid membrane. In terms of biological role, f(1)F(0) ATP synthase produces ATP from ADP in the presence of a proton or sodium gradient. F-type ATPases consist of two structural domains, F(1) containing the extramembraneous catalytic core and F(0) containing the membrane proton channel, linked together by a central stalk and a peripheral stalk. During catalysis, ATP synthesis in the catalytic domain of F(1) is coupled via a rotary mechanism of the central stalk subunits to proton translocation. Component of the F(0) channel, it forms part of the peripheral stalk, linking F(1) to F(0). This Anthoceros angustus (Hornwort) protein is ATP synthase subunit b, chloroplastic.